Reading from the N-terminus, the 457-residue chain is Nuclear distribution protein PAC1 (457 aa).

Positions 73 to 106 form a coiled coil; the sequence is SSIVRLQRRIIELEKEIQELTDENENLRENGPSS. WD repeat units follow at residues 126-165, 169-211, 216-257, 260-299, 322-362, 382-419, and 423-457; these read SAGA…MPVA, AHMR…LQLI, GHEH…CLKS, PHTE…SFGT, SHRF…FVAH, GHSS…VVRS, and LHSG…ILMK.

The protein belongs to the WD repeat LIS1/nudF family. As to quaternary structure, self-associates. Interacts with NDL1 and dynein.

It is found in the cytoplasm. It localises to the cytoskeleton. The protein localises to the spindle pole. Its function is as follows. Positively regulates the activity of the minus-end directed microtubule motor protein dynein. Plays a central role in positioning the mitotic spindle at the bud neck during cell division. Targets cytoplasmic dynein to microtubule plus ends, thereby promoting dynein-mediated microtubule sliding along the bud cortex and consequently the movement of the mitotic spindle to the bud neck. This is Nuclear distribution protein PAC1 from Lachancea thermotolerans (strain ATCC 56472 / CBS 6340 / NRRL Y-8284) (Yeast).